Here is a 149-residue protein sequence, read N- to C-terminus: Ribonuclease pancreatic (149 aa).

The N-terminal stretch at 1 to 25 (MGLEKSFILFPLLILVLGWVQSSLG) is a signal peptide. Residues K32 and R35 each contribute to the substrate site. H37 (proton acceptor) is an active-site residue. Cystine bridges form between C51-C109, C65-C120, C83-C135, and C90-C97. The N-linked (GlcNAc...) asparagine glycan is linked to N59. 66-70 (KPVNT) serves as a coordination point for substrate. An N-linked (GlcNAc...) asparagine glycan is attached at N87. Residues K91 and R110 each contribute to the substrate site. The Proton donor role is filled by H144.

The protein belongs to the pancreatic ribonuclease family. Monomer. Interacts with and forms tight 1:1 complexes with RNH1. Dimerization of two such complexes may occur. Interaction with RNH1 inhibits this protein. In terms of tissue distribution, pancreas.

It localises to the secreted. The catalysed reaction is an [RNA] containing cytidine + H2O = an [RNA]-3'-cytidine-3'-phosphate + a 5'-hydroxy-ribonucleotide-3'-[RNA].. It carries out the reaction an [RNA] containing uridine + H2O = an [RNA]-3'-uridine-3'-phosphate + a 5'-hydroxy-ribonucleotide-3'-[RNA].. In terms of biological role, endonuclease that catalyzes the cleavage of RNA on the 3' side of pyrimidine nucleotides. Acts on single-stranded and double-stranded RNA. The polypeptide is Ribonuclease pancreatic (RNASE1) (Abrothrix jelskii (Jelski's altiplano mouse)).